Consider the following 521-residue polypeptide: GMP synthase [glutamine-hydrolyzing] (521 aa).

The 196-residue stretch at 8–203 folds into the Glutamine amidotransferase type-1 domain; sequence KILILDFGAQ…VVDICGCQTL (196 aa). The Nucleophile role is filled by cysteine 85. Active-site residues include histidine 177 and glutamate 179. One can recognise a GMPS ATP-PPase domain in the interval 204–396; that stretch reads WTAANIIDDQ…LGLPRTMVYR (193 aa). Residue 231–237 participates in ATP binding; that stretch reads SGGVDSS.

As to quaternary structure, homodimer.

It catalyses the reaction XMP + L-glutamine + ATP + H2O = GMP + L-glutamate + AMP + diphosphate + 2 H(+). The protein operates within purine metabolism; GMP biosynthesis; GMP from XMP (L-Gln route): step 1/1. In terms of biological role, catalyzes the synthesis of GMP from XMP. The sequence is that of GMP synthase [glutamine-hydrolyzing] from Xanthomonas oryzae pv. oryzae (strain PXO99A).